A 414-amino-acid polypeptide reads, in one-letter code: Gamma-glutamyl phosphate reductase (414 aa).

Belongs to the gamma-glutamyl phosphate reductase family.

It localises to the cytoplasm. The enzyme catalyses L-glutamate 5-semialdehyde + phosphate + NADP(+) = L-glutamyl 5-phosphate + NADPH + H(+). It participates in amino-acid biosynthesis; L-proline biosynthesis; L-glutamate 5-semialdehyde from L-glutamate: step 2/2. Catalyzes the NADPH-dependent reduction of L-glutamate 5-phosphate into L-glutamate 5-semialdehyde and phosphate. The product spontaneously undergoes cyclization to form 1-pyrroline-5-carboxylate. The chain is Gamma-glutamyl phosphate reductase from Xanthomonas oryzae pv. oryzae (strain KACC10331 / KXO85).